Reading from the N-terminus, the 658-residue chain is NADPH-dependent diflavin oxidoreductase 1 (658 aa).

A Flavodoxin-like domain is found at 16–160 (LTILYMTQTG…ELGPWMNRFW (145 aa)). FMN-binding positions include 22–27 (TQTGTS), 69–72 (STTG), 107–116 (LGDSTYPRFC), and Asp142. The FAD-binding FR-type domain occupies 215-502 (QGWSISILDK…IKPGYLTLPP (288 aa)). Residues Arg400, 430-433 (REFS), and 474-477 (GLCT) each bind FAD. NADP(+) is bound by residues Thr514, 574-575 (SR), and 580-584 (KTYVQ). Trp657 is a binding site for FAD.

This sequence belongs to the NADPH-dependent diflavin oxidoreductase NDOR1 family. In the N-terminal section; belongs to the flavodoxin family. It in the C-terminal section; belongs to the flavoprotein pyridine nucleotide cytochrome reductase family. In terms of assembly, interacts with DRE2; as part of the cytosolic iron-sulfur (Fe-S) protein assembly (CIA) machinery. It depends on FAD as a cofactor. FMN serves as cofactor.

It localises to the cytoplasm. Its subcellular location is the mitochondrion. The catalysed reaction is 2 oxidized [2Fe-2S]-[protein] + NADPH = 2 reduced [2Fe-2S]-[protein] + NADP(+) + H(+). NADPH-dependent reductase which is a central component of the cytosolic iron-sulfur (Fe-S) protein assembly (CIA) machinery. Transfers electrons from NADPH via its FAD and FMN prosthetic groups to the [2Fe-2S] cluster of DRE2, another key component of the CIA machinery. In turn, this reduced cluster provides electrons for assembly of cytosolic iron-sulfur cluster proteins. Positively controls H(2)O(2)-induced cell death. This is NADPH-dependent diflavin oxidoreductase 1 from Mycosarcoma maydis (Corn smut fungus).